A 143-amino-acid chain; its full sequence is Large ribosomal subunit protein uL11 (143 aa).

The protein belongs to the universal ribosomal protein uL11 family. As to quaternary structure, part of the ribosomal stalk of the 50S ribosomal subunit. Interacts with L10 and the large rRNA to form the base of the stalk. L10 forms an elongated spine to which L12 dimers bind in a sequential fashion forming a multimeric L10(L12)X complex. In terms of processing, one or more lysine residues are methylated.

In terms of biological role, forms part of the ribosomal stalk which helps the ribosome interact with GTP-bound translation factors. This Borrelia garinii subsp. bavariensis (strain ATCC BAA-2496 / DSM 23469 / PBi) (Borreliella bavariensis) protein is Large ribosomal subunit protein uL11.